Consider the following 371-residue polypeptide: 4-hydroxy-3-methylbut-2-en-1-yl diphosphate synthase (flavodoxin) (371 aa).

Cysteine 270, cysteine 273, cysteine 305, and glutamate 312 together coordinate [4Fe-4S] cluster.

This sequence belongs to the IspG family. It depends on [4Fe-4S] cluster as a cofactor.

The catalysed reaction is (2E)-4-hydroxy-3-methylbut-2-enyl diphosphate + oxidized [flavodoxin] + H2O + 2 H(+) = 2-C-methyl-D-erythritol 2,4-cyclic diphosphate + reduced [flavodoxin]. It functions in the pathway isoprenoid biosynthesis; isopentenyl diphosphate biosynthesis via DXP pathway; isopentenyl diphosphate from 1-deoxy-D-xylulose 5-phosphate: step 5/6. Functionally, converts 2C-methyl-D-erythritol 2,4-cyclodiphosphate (ME-2,4cPP) into 1-hydroxy-2-methyl-2-(E)-butenyl 4-diphosphate. This is 4-hydroxy-3-methylbut-2-en-1-yl diphosphate synthase (flavodoxin) from Shewanella sediminis (strain HAW-EB3).